We begin with the raw amino-acid sequence, 243 residues long: NAD(P)H-quinone oxidoreductase subunit K, chloroplastic (243 aa).

4 residues coordinate [4Fe-4S] cluster: cysteine 65, cysteine 66, cysteine 130, and cysteine 161.

It belongs to the complex I 20 kDa subunit family. NDH is composed of at least 16 different subunits, 5 of which are encoded in the nucleus. Requires [4Fe-4S] cluster as cofactor.

The protein resides in the plastid. It is found in the chloroplast thylakoid membrane. It carries out the reaction a plastoquinone + NADH + (n+1) H(+)(in) = a plastoquinol + NAD(+) + n H(+)(out). It catalyses the reaction a plastoquinone + NADPH + (n+1) H(+)(in) = a plastoquinol + NADP(+) + n H(+)(out). Functionally, NDH shuttles electrons from NAD(P)H:plastoquinone, via FMN and iron-sulfur (Fe-S) centers, to quinones in the photosynthetic chain and possibly in a chloroplast respiratory chain. The immediate electron acceptor for the enzyme in this species is believed to be plastoquinone. Couples the redox reaction to proton translocation, and thus conserves the redox energy in a proton gradient. This is NAD(P)H-quinone oxidoreductase subunit K, chloroplastic from Marchantia polymorpha (Common liverwort).